A 525-amino-acid polypeptide reads, in one-letter code: Protein kinase PINOID 2 (525 aa).

The interval 1–27 (MANSSIFYKDNESDYESSTVGPDSSRR) is disordered. Positions 87 to 465 (FRLLKRLGSG…SIEIKRHEFF (379 aa)) constitute a Protein kinase domain. ATP-binding positions include 93–101 (LGSGDIGSV) and Lys-118. Asp-214 functions as the Proton acceptor in the catalytic mechanism. Residues 466-525 (EGVNWALIRSIKPPWVPKEETSHKTKGDNRSVNYYLPPRFMMSRKERNEPYHVSNYFDYF) enclose the AGC-kinase C-terminal domain.

The protein belongs to the protein kinase superfamily. Ser/Thr protein kinase family.

The catalysed reaction is L-seryl-[protein] + ATP = O-phospho-L-seryl-[protein] + ADP + H(+). It catalyses the reaction L-threonyl-[protein] + ATP = O-phospho-L-threonyl-[protein] + ADP + H(+). Serine/threonine-protein kinase involved in the regulation of auxin signaling. Plays a minor role in the regulation of cellular auxin efflux and cotyledon organogenesis. In Arabidopsis thaliana (Mouse-ear cress), this protein is Protein kinase PINOID 2 (PID2).